The following is a 79-amino-acid chain: Sec-independent protein translocase protein TatA (79 aa).

Residues 1 to 21 form a helical membrane-spanning segment; it reads MGGISIWQLLIIALIVVLLFG. The disordered stretch occupies residues 43–79; sequence MSSEEDKKALEDTEAAKTAQTTQQATEKKPESNKEQA. Over residues 46–57 the composition is skewed to basic and acidic residues; that stretch reads EEDKKALEDTEA. Over residues 58-67 the composition is skewed to low complexity; it reads AKTAQTTQQA. Residues 68–79 show a composition bias toward basic and acidic residues; it reads TEKKPESNKEQA.

It belongs to the TatA/E family. In terms of assembly, the Tat system comprises two distinct complexes: a TatABC complex, containing multiple copies of TatA, TatB and TatC subunits, and a separate TatA complex, containing only TatA subunits. Substrates initially bind to the TatABC complex, which probably triggers association of the separate TatA complex to form the active translocon.

Its subcellular location is the cell inner membrane. Its function is as follows. Part of the twin-arginine translocation (Tat) system that transports large folded proteins containing a characteristic twin-arginine motif in their signal peptide across membranes. TatA could form the protein-conducting channel of the Tat system. This is Sec-independent protein translocase protein TatA from Shewanella putrefaciens (strain CN-32 / ATCC BAA-453).